The following is a 200-amino-acid chain: MLIAVVGKAGVGKTTVLQYIADYFHFPVFFADRFIHQQYANGQAGYAIVKQQFGAQFVNHEAVDRKQLAQYVFNQPDELKRLSNLTKPLVQEWLNQLKAQFQDKIALVEIAVMLNYWNDYRPFFDEVIQIERDAKIVKQALKARGVDVEQVQKLIADPTYPILTVINNSTVAECALHVTQFLESIAKSDKCHHGHYQTPK.

Residues Leu-2 to Lys-200 form the DPCK domain. Residue Gly-10 to Thr-15 participates in ATP binding.

This sequence belongs to the CoaE family.

It is found in the cytoplasm. It catalyses the reaction 3'-dephospho-CoA + ATP = ADP + CoA + H(+). It participates in cofactor biosynthesis; coenzyme A biosynthesis; CoA from (R)-pantothenate: step 5/5. In terms of biological role, catalyzes the phosphorylation of the 3'-hydroxyl group of dephosphocoenzyme A to form coenzyme A. The protein is Dephospho-CoA kinase of Mycoplasma pneumoniae (strain ATCC 29342 / M129 / Subtype 1) (Mycoplasmoides pneumoniae).